The sequence spans 86 residues: Large ribosomal subunit protein bL27 (86 aa).

The segment at 1 to 22 (MAHKKAGGSSRNGRDSESKRLG) is disordered.

It belongs to the bacterial ribosomal protein bL27 family.

The polypeptide is Large ribosomal subunit protein bL27 (Acidithiobacillus ferrooxidans (strain ATCC 23270 / DSM 14882 / CIP 104768 / NCIMB 8455) (Ferrobacillus ferrooxidans (strain ATCC 23270))).